Here is a 107-residue protein sequence, read N- to C-terminus: C-X-C motif chemokine 3 (107 aa).

Positions 1–34 (MAHATLSAAPSNPRLLRVALLLLLLVAASRRAAG) are cleaved as a signal peptide. Cystine bridges form between cysteine 43-cysteine 69 and cysteine 45-cysteine 85.

This sequence belongs to the intercrine alpha (chemokine CxC) family. Post-translationally, N-terminal processed form GRO-gamma(5-73) is produced by proteolytic cleavage after secretion from peripheral blood monocytes.

Its subcellular location is the secreted. Its function is as follows. Ligand for CXCR2. Has chemotactic activity for neutrophils. May play a role in inflammation and exert its effects on endothelial cells in an autocrine fashion. In vitro, the processed form GRO-gamma(5-73) shows a fivefold higher chemotactic activity for neutrophilic granulocytes. The chain is C-X-C motif chemokine 3 (CXCL3) from Homo sapiens (Human).